Consider the following 128-residue polypeptide: Large ribosomal subunit protein bL12 (128 aa).

It belongs to the bacterial ribosomal protein bL12 family. Homodimer. Part of the ribosomal stalk of the 50S ribosomal subunit. Forms a multimeric L10(L12)X complex, where L10 forms an elongated spine to which 2 to 4 L12 dimers bind in a sequential fashion. Binds GTP-bound translation factors.

Forms part of the ribosomal stalk which helps the ribosome interact with GTP-bound translation factors. Is thus essential for accurate translation. This is Large ribosomal subunit protein bL12 from Corynebacterium jeikeium (strain K411).